The chain runs to 410 residues: Argininosuccinate synthase (410 aa).

Residues 14–22 (AYSGGLDTS) and alanine 41 contribute to the ATP site. L-citrulline is bound by residues tyrosine 92 and serine 97. Position 122 (glycine 122) interacts with ATP. L-aspartate contacts are provided by threonine 124, asparagine 128, and aspartate 129. L-citrulline is bound at residue asparagine 128. Positions 132, 183, 192, 268, and 280 each coordinate L-citrulline.

This sequence belongs to the argininosuccinate synthase family. Type 1 subfamily. As to quaternary structure, homotetramer.

It localises to the cytoplasm. It carries out the reaction L-citrulline + L-aspartate + ATP = 2-(N(omega)-L-arginino)succinate + AMP + diphosphate + H(+). It participates in amino-acid biosynthesis; L-arginine biosynthesis; L-arginine from L-ornithine and carbamoyl phosphate: step 2/3. This Parvibaculum lavamentivorans (strain DS-1 / DSM 13023 / NCIMB 13966) protein is Argininosuccinate synthase.